Consider the following 324-residue polypeptide: Glutaminase 2 (324 aa).

Positions 75, 127, 171, 178, 202, 254, and 272 each coordinate substrate.

It belongs to the glutaminase family. In terms of assembly, homotetramer.

The catalysed reaction is L-glutamine + H2O = L-glutamate + NH4(+). The protein is Glutaminase 2 of Halalkalibacterium halodurans (strain ATCC BAA-125 / DSM 18197 / FERM 7344 / JCM 9153 / C-125) (Bacillus halodurans).